Consider the following 188-residue polypeptide: MNGDDAFAKRPRDDAKASEKRSKAFDDIAKYFSKEEWEKMKFSEKISCVHMKRKYEAMTKLGFNVTLSLFMRNKRATDSQRNDSDNDRNRGNEVERPQMTFGRLQRIIPKIMPEKPAEEGSDSKGVPEASGPQNDGKKLCPPGKASSSEKIHERSGPKRGKHAWTHRLRERKQLVIYEEISDPEEDDK.

Disordered stretches follow at residues 1–22 and 74–188; these read MNGD…EKRS and KRAT…EDDK. Residues 20–83 enclose the KRAB-related domain; it reads KRSKAFDDIA…KRATDSQRND (64 aa). 2 stretches are compositionally biased toward basic and acidic residues: residues 75–96 and 112–122; these read RATD…EVER and MPEKPAEEGSD. A Phosphoserine modification is found at Ser-123. Positions 147 to 156 are enriched in basic and acidic residues; the sequence is SSEKIHERSG. The span at 157–170 shows a compositional bias: basic residues; that stretch reads PKRGKHAWTHRLRE. The span at 179–188 shows a compositional bias: acidic residues; it reads EISDPEEDDK.

This sequence belongs to the SSX family. As to expression, not detected in any normal tissues. Expressed in a melanoma cell line.

Functionally, could act as a modulator of transcription. In Homo sapiens (Human), this protein is Putative protein SSX6.